The primary structure comprises 947 residues: Bifunctional glutamine synthetase adenylyltransferase/adenylyl-removing enzyme (947 aa).

The segment at methionine 1–glutamate 440 is adenylyl removase. Residues serine 450–valine 947 are adenylyl transferase.

The protein belongs to the GlnE family. Mg(2+) is required as a cofactor.

It catalyses the reaction [glutamine synthetase]-O(4)-(5'-adenylyl)-L-tyrosine + phosphate = [glutamine synthetase]-L-tyrosine + ADP. The catalysed reaction is [glutamine synthetase]-L-tyrosine + ATP = [glutamine synthetase]-O(4)-(5'-adenylyl)-L-tyrosine + diphosphate. In terms of biological role, involved in the regulation of glutamine synthetase GlnA, a key enzyme in the process to assimilate ammonia. When cellular nitrogen levels are high, the C-terminal adenylyl transferase (AT) inactivates GlnA by covalent transfer of an adenylyl group from ATP to specific tyrosine residue of GlnA, thus reducing its activity. Conversely, when nitrogen levels are low, the N-terminal adenylyl removase (AR) activates GlnA by removing the adenylyl group by phosphorolysis, increasing its activity. The regulatory region of GlnE binds the signal transduction protein PII (GlnB) which indicates the nitrogen status of the cell. This Salmonella agona (strain SL483) protein is Bifunctional glutamine synthetase adenylyltransferase/adenylyl-removing enzyme.